A 149-amino-acid chain; its full sequence is Macrodomain Ter protein (149 aa).

This sequence belongs to the MatP family. Homodimer.

Its subcellular location is the cytoplasm. Required for spatial organization of the terminus region of the chromosome (Ter macrodomain) during the cell cycle. Prevents early segregation of duplicated Ter macrodomains during cell division. Binds specifically to matS, which is a 13 bp signature motif repeated within the Ter macrodomain. This chain is Macrodomain Ter protein, found in Vibrio vulnificus (strain CMCP6).